The primary structure comprises 338 residues: Glyceraldehyde-3-phosphate dehydrogenase (338 aa).

Residues 11-12 (TI) and Gly-111 contribute to the NAD(+) site. D-glyceraldehyde 3-phosphate is bound at residue 140-142 (SCN). Cys-141 acts as the Nucleophile in catalysis. Residue Arg-169 participates in NAD(+) binding. 195 to 196 (HG) provides a ligand contact to D-glyceraldehyde 3-phosphate. Gln-302 is an NAD(+) binding site.

The protein belongs to the glyceraldehyde-3-phosphate dehydrogenase family. In terms of assembly, homotetramer.

It is found in the cytoplasm. It carries out the reaction D-glyceraldehyde 3-phosphate + phosphate + NADP(+) = (2R)-3-phospho-glyceroyl phosphate + NADPH + H(+). The catalysed reaction is D-glyceraldehyde 3-phosphate + phosphate + NAD(+) = (2R)-3-phospho-glyceroyl phosphate + NADH + H(+). Its pathway is carbohydrate degradation; glycolysis; pyruvate from D-glyceraldehyde 3-phosphate: step 1/5. In Methanobacterium bryantii, this protein is Glyceraldehyde-3-phosphate dehydrogenase (gap).